Consider the following 149-residue polypeptide: Pleckstrin homology domain-containing family J member 1 (149 aa).

The PH domain maps to 15–108 (RAEKAAELSM…WVEALTNASY (94 aa)).

This Xenopus tropicalis (Western clawed frog) protein is Pleckstrin homology domain-containing family J member 1 (plekhj1).